Here is a 303-residue protein sequence, read N- to C-terminus: Oxygen-dependent coproporphyrinogen-III oxidase (303 aa).

Ser-93 contributes to the substrate binding site. Residues His-97 and His-107 each coordinate a divalent metal cation. His-107 (proton donor) is an active-site residue. A substrate-binding site is contributed by 109–111; sequence NVR. A divalent metal cation contacts are provided by His-146 and His-176. The segment at 241-276 is important for dimerization; the sequence is YVEFNLVYDRGTLFGLQSGGRTESILMSLPPQVRWG. Substrate is bound at residue 259-261; sequence GGR.

It belongs to the aerobic coproporphyrinogen-III oxidase family. As to quaternary structure, homodimer. A divalent metal cation serves as cofactor.

The protein resides in the cytoplasm. It catalyses the reaction coproporphyrinogen III + O2 + 2 H(+) = protoporphyrinogen IX + 2 CO2 + 2 H2O. It participates in porphyrin-containing compound metabolism; protoporphyrin-IX biosynthesis; protoporphyrinogen-IX from coproporphyrinogen-III (O2 route): step 1/1. Functionally, involved in the heme biosynthesis. Catalyzes the aerobic oxidative decarboxylation of propionate groups of rings A and B of coproporphyrinogen-III to yield the vinyl groups in protoporphyrinogen-IX. The protein is Oxygen-dependent coproporphyrinogen-III oxidase of Pseudomonas entomophila (strain L48).